A 758-amino-acid polypeptide reads, in one-letter code: Spastin (758 aa).

Positions 1–99 (MVRTKNQSSS…PTTCSPRSGH (99 aa)) are disordered. Topologically, residues 1 to 121 (MVRTKNQSSS…KQNLYVVSFP (121 aa)) are cytoplasmic. A required for localization to punctate cytoplasmic foci region spans residues 1–210 (MVRTKNQSSS…RPIQPLEMAA (210 aa)). 4 stretches are compositionally biased toward low complexity: residues 8 to 28 (SSSS…SSGA), 43 to 58 (RSSS…AGGS), 66 to 76 (SSNRRSPGSSP), and 85 to 95 (TDDLTPTTCSP). The segment at residues 122 to 142 (IIFLFNVLRSLIYQLFCIFRY) is an intramembrane region (helical). The Cytoplasmic portion of the chain corresponds to 143 to 758 (LYGASTKVIY…WSQDYGDITI (616 aa)). Composition is skewed to polar residues over residues 169-180 (SKEQQQSLNHPS) and 189-198 (QEQQLSNQPQ). Residues 169 to 203 (SKEQQQSLNHPSELSREGDGQEQQLSNQPQRFRPI) form a disordered region. The segment at 208–758 (MAANRPGGGY…WSQDYGDITI (551 aa)) is sufficient for interaction with microtubules and microtubule severing. Positions 233–308 (HRRAFEYISK…SMARDRLHFL (76 aa)) constitute an MIT domain. 2 disordered regions span residues 353-375 (RVRS…SGRK) and 390-454 (NKSQ…ASTP). 2 stretches are compositionally biased toward polar residues: residues 390–406 (NKSQ…TSVG) and 425–454 (QFSS…ASTP). A required for interaction with microtubules region spans residues 443-455 (NNGPSGSGASTPV). 523 to 530 (GPPGNGKT) serves as a coordination point for ATP.

It belongs to the AAA ATPase family. Spastin subfamily. As to quaternary structure, homohexamer. The homohexamer is stabilized by ATP-binding. The homohexamer may adopt a ring conformation through which microtubules pass prior to being severed. Interacts with microtubules. Interacts with atl; may be involved in microtubule dynamics.

It localises to the membrane. The protein localises to the cytoplasm. Its subcellular location is the cytoskeleton. It is found in the microtubule organizing center. The protein resides in the centrosome. It localises to the chromosome. The protein localises to the lipid droplet. The enzyme catalyses n ATP + n H2O + a microtubule = n ADP + n phosphate + (n+1) alpha/beta tubulin heterodimers.. In terms of biological role, ATP-dependent microtubule severing protein. Stimulates microtubule minus-end depolymerization and poleward microtubule flux in the mitotic spindle. Regulates microtubule stability in the neuromuscular junction synapse. Involved in lipid metabolism by regulating the size and distribution of lipid droplets. Involved in axon regeneration by regulating microtubule severing. The polypeptide is Spastin (Drosophila erecta (Fruit fly)).